Here is a 508-residue protein sequence, read N- to C-terminus: Histidine--tRNA ligase, cytoplasmic (508 aa).

The 57-residue stretch at 3 to 59 (SPALEELVLNSRHRLVRGLKQQKASADQIEEEVAKLLKLKAQLGHDESKQKFVLKTP) folds into the WHEP-TRS domain. S66 is subject to Phosphoserine. L-histidine contacts are provided by residues 130–132 (DLT), R157, D177, R326, and 330–331 (YY).

It belongs to the class-II aminoacyl-tRNA synthetase family. Homodimer.

The protein localises to the cytoplasm. The enzyme catalyses tRNA(His) + L-histidine + ATP = L-histidyl-tRNA(His) + AMP + diphosphate + H(+). Catalyzes the ATP-dependent ligation of histidine to the 3'-end of its cognate tRNA, via the formation of an aminoacyl-adenylate intermediate (His-AMP). Plays a role in axon guidance. This chain is Histidine--tRNA ligase, cytoplasmic (HARS1), found in Mesocricetus auratus (Golden hamster).